Here is a 92-residue protein sequence, read N- to C-terminus: Small ribosomal subunit protein uS19 (92 aa).

The protein belongs to the universal ribosomal protein uS19 family.

In terms of biological role, protein S19 forms a complex with S13 that binds strongly to the 16S ribosomal RNA. This Rickettsia africae (strain ESF-5) protein is Small ribosomal subunit protein uS19.